The sequence spans 68 residues: Glu S.griseus protease inhibitor (68 aa).

S1 is subject to N-acetylserine. C3 and C48 are joined by a disulfide.

This sequence belongs to the protease inhibitor I13 (potato type I serine protease inhibitor) family.

In terms of biological role, competitively inhibits Glu S.griseus protease by forming probably a 1:1 complex. BGIA has no inhibitory activity against 2 other acidic amino acid-specific endopeptidases (S.aureus protease V8 and B.subtilis proteinase), chymotrypsin, trypsin, pancreatic elastase, and papain, although subtilisin Carlsberg was strongly inhibited. The protein is Glu S.griseus protease inhibitor of Momordica charantia (Bitter gourd).